The sequence spans 260 residues: Dehydrogenase/reductase SDR family member 11 (260 aa).

The N-terminal stretch at 1-30 is a signal peptide; it reads MTRAGMERWRDRLALVTGASGGIGAAVARA. NADP(+) is bound by residues 18 to 23, 43 to 44, Glu49, 70 to 71, and Asn97; these read GASGGI, RT, and DL. The substrate site is built by Ser151 and Tyr166. NADP(+)-binding positions include Tyr166, Lys170, 201–204, and Lys208; that span reads VETQ. Tyr166 (proton acceptor) is an active-site residue.

It belongs to the short-chain dehydrogenases/reductases (SDR) family. As to quaternary structure, homotetramer.

The protein resides in the secreted. It carries out the reaction a 3beta-hydroxysteroid + NADP(+) = a 3-oxosteroid + NADPH + H(+). The catalysed reaction is 17beta-estradiol + NAD(+) = estrone + NADH + H(+). It catalyses the reaction 17beta-estradiol + NADP(+) = estrone + NADPH + H(+). It functions in the pathway steroid biosynthesis; estrogen biosynthesis. With respect to regulation, inhibited by flavonoids including apigenin, luteolin, genistein, kaempferol and quercetin and also by carbenoxolone, zearalenone, glycyrrhetinic, curcumin and flufenamic acid. Catalyzes the conversion of the 17-keto group of estrone, 4- and 5-androstenes and 5-alpha-androstanes into their 17-beta-hydroxyl metabolites and the conversion of the 3-keto group of 3-, 3,17- and 3,20- diketosteroids into their 3-hydroxyl metabolites. Exhibits reductive 3-beta-hydroxysteroid dehydrogenase activity toward 5-beta-androstanes, 5-beta-pregnanes, 4-pregnenes and bile acids. May also reduce endogenous and exogenous alpha-dicarbonyl compounds and xenobiotic alicyclic ketones. The chain is Dehydrogenase/reductase SDR family member 11 (Dhrs11) from Mus musculus (Mouse).